Consider the following 626-residue polypeptide: DNA mismatch repair protein MutL (626 aa).

The protein belongs to the DNA mismatch repair MutL/HexB family.

This protein is involved in the repair of mismatches in DNA. It is required for dam-dependent methyl-directed DNA mismatch repair. May act as a 'molecular matchmaker', a protein that promotes the formation of a stable complex between two or more DNA-binding proteins in an ATP-dependent manner without itself being part of a final effector complex. The polypeptide is DNA mismatch repair protein MutL (Pelodictyon phaeoclathratiforme (strain DSM 5477 / BU-1)).